The sequence spans 266 residues: Trypsin Blo t 3 (266 aa).

A signal peptide spans 1 to 15 (MKVLVLFCLVSLAAA). Positions 16 to 35 (GPLKDALNKAQVDAFYAEGY) are excised as a propeptide. The Peptidase S1 domain maps to 36 to 260 (IVDGSNAADG…RVGNYISWIK (225 aa)). Cys60 and Cys76 form a disulfide bridge. Residues His75 and Asp120 each act as charge relay system in the active site. 2 cysteine pairs are disulfide-bonded: Cys187-Cys204 and Cys216-Cys240. Ser220 (charge relay system) is an active-site residue.

The protein belongs to the peptidase S1 family.

The protein resides in the secreted. The catalysed reaction is Preferential cleavage: Arg-|-Xaa, Lys-|-Xaa.. The sequence is that of Trypsin Blo t 3 from Blomia tropicalis (Mite).